We begin with the raw amino-acid sequence, 482 residues long: ATP synthase subunit beta, chloroplastic (482 aa).

162 to 169 is a binding site for ATP; it reads GGAGVGKT.

Belongs to the ATPase alpha/beta chains family. As to quaternary structure, F-type ATPases have 2 components, CF(1) - the catalytic core - and CF(0) - the membrane proton channel. CF(1) has five subunits: alpha(3), beta(3), gamma(1), delta(1), epsilon(1). CF(0) has four main subunits: a(1), b(1), b'(1) and c(9-12).

It localises to the plastid. Its subcellular location is the chloroplast thylakoid membrane. It carries out the reaction ATP + H2O + 4 H(+)(in) = ADP + phosphate + 5 H(+)(out). Produces ATP from ADP in the presence of a proton gradient across the membrane. The catalytic sites are hosted primarily by the beta subunits. The protein is ATP synthase subunit beta, chloroplastic of Pleurastrum terricola (Filamentous green alga).